The sequence spans 440 residues: Cell division protein DivIB (440 aa).

Basic and acidic residues predominate over residues 1-10; that stretch reads MMDDKTKNDQ. Disordered regions lie at residues 1 to 97 and 123 to 154; these read MMDD…DSNI and QHQSAPNEQNSDSNDEETVTKKERKSKVTQLK. The Cytoplasmic portion of the chain corresponds to 1-174; the sequence is MMDDKTKNDQ…RRKRQKRIQY (174 aa). Residues 12-21 are compositionally biased toward acidic residues; sequence ESNEDKDELE. Residues 27–39 are compositionally biased toward basic residues; sequence TSKKRRQRKRSKA. Low complexity predominate over residues 78–87; sequence DSASSHANDN. Positions 88 to 97 are enriched in acidic residues; sequence NIDDSTDSNI. A compositionally biased stretch (polar residues) spans 124 to 134; that stretch reads HQSAPNEQNSD. The chain crosses the membrane as a helical span at residues 175 to 195; that stretch reads SVITILVLLIAVILIYMFSPL. The POTRA domain maps to 196–264; sequence SKIAHVNING…NTLNVDITEN (69 aa). Residues 196-440 lie on the Extracellular side of the membrane; it reads SKIAHVNING…KINKQSSKNN (245 aa). The disordered stretch occupies residues 397–440; the sequence is YRGNTSTQSESDKNVTKSSQEENQAKEELQSVLNKINKQSSKNN. The segment covering 406-425 has biased composition (basic and acidic residues); the sequence is ESDKNVTKSSQEENQAKEEL. Residues 427-440 show a composition bias toward polar residues; the sequence is SVLNKINKQSSKNN.

This sequence belongs to the FtsQ/DivIB family. DivIB subfamily.

Its subcellular location is the cell membrane. Functionally, cell division protein that may be involved in stabilizing or promoting the assembly of the division complex. This Staphylococcus aureus (strain MRSA252) protein is Cell division protein DivIB.